Consider the following 712-residue polypeptide: Satratoxin biosynthesis SC3 cluster transcription factor SAT20 (712 aa).

Composition is skewed to polar residues over residues 1 to 10, 25 to 36, 131 to 145, and 269 to 282; these read MPNLPGSSDS, CSSTKPNAAQEN, SEPS…WPSL, and SLPS…SSTG. 3 disordered regions span residues 1-43, 115-145, and 264-294; these read MPNL…ELAQ, SQNA…WPSL, and PVSG…KADR. The zn(2)-C6 fungal-type DNA-binding region spans 306 to 339; it reads CFRCRMYKENCDPGLPCKNCMRVQVTRRTFFGPC. The stretch at 530-560 forms a coiled coil; it reads QIQIMVAQVMLDKQKNALKRLQERALSKNRH.

It localises to the nucleus. Transcriptional regulator that may regulate the expression of the satratoxin biosynthesis SC3 cluster, one of the 3 clusters involved in the biosynthesis of satratoxins, trichothecene mycotoxins that are associated with human food poisonings. In Stachybotrys chartarum (strain CBS 109288 / IBT 7711) (Toxic black mold), this protein is Satratoxin biosynthesis SC3 cluster transcription factor SAT20.